Reading from the N-terminus, the 927-residue chain is Autophagy-related protein 18h (927 aa).

2 disordered regions span residues 1–25 (MKSN…NGTN) and 333–353 (DGPG…VGSH). Residues 335–344 (PGPSLSSSPG) are compositionally biased toward low complexity. WD repeat units lie at residues 379–419 (AHTS…TKNG) and 441–482 (MTSA…NVLE). Disordered stretches follow at residues 750-788 (NRGF…EERR) and 844-927 (IENS…SEEG). The span at 846–859 (NSSGISGDSNVSSN) shows a compositional bias: low complexity. Residues 896–907 (ETEHKDAPSDGK) show a composition bias toward basic and acidic residues.

This sequence belongs to the WD repeat PROPPIN family. Component of the PI(3,5)P2 regulatory complex at least composed of ATG18, SAC/FIG4, FAB1 and VAC14. As to expression, expressed in roots, flowers and leaves.

The protein resides in the preautophagosomal structure membrane. It localises to the vacuole membrane. In terms of biological role, the PI(3,5)P2 regulatory complex regulates both the synthesis and turnover of phosphatidylinositol 3,5-bisphosphate (PtdIns(3,5)P2). Required for autophagy. The sequence is that of Autophagy-related protein 18h (ATG18H) from Arabidopsis thaliana (Mouse-ear cress).